The chain runs to 268 residues: UPF0328 protein ECU10_1850 (268 aa).

Belongs to the UPF0328 family.

This is UPF0328 protein ECU10_1850 from Encephalitozoon cuniculi (strain GB-M1) (Microsporidian parasite).